A 474-amino-acid polypeptide reads, in one-letter code: 6-phospho-beta-galactosidase (474 aa).

The D-galactose 6-phosphate site is built by glutamine 19, histidine 116, asparagine 159, glutamate 160, and asparagine 297. Glutamate 160 acts as the Proton donor in catalysis. The active-site Nucleophile is the glutamate 375. D-galactose 6-phosphate-binding residues include serine 433, tryptophan 434, lysine 440, and tyrosine 442.

It belongs to the glycosyl hydrolase 1 family.

It catalyses the reaction a 6-phospho-beta-D-galactoside + H2O = D-galactose 6-phosphate + an alcohol. The protein operates within carbohydrate metabolism; lactose degradation; D-galactose 6-phosphate and beta-D-glucose from lactose 6-phosphate: step 1/1. The polypeptide is 6-phospho-beta-galactosidase (Lacticaseibacillus rhamnosus (Lactobacillus rhamnosus)).